Reading from the N-terminus, the 90-residue chain is MKLIIFVVFCITIYGSTSGQQEVARRYCGRHLAVTMADLCFGVQFDKRNTQYEGYHWPLLAYSEERIKRQGIADECCLVPCTTNVLSSYC.

Positions 1–19 are cleaved as a signal peptide; it reads MKLIIFVVFCITIYGSTSG. Disulfide bonds link Cys-28–Cys-77, Cys-40–Cys-90, and Cys-76–Cys-81. Residues 49–67 constitute a propeptide, c peptide like; sequence NTQYEGYHWPLLAYSEERI.

Belongs to the insulin family. Heterodimer of a B chain and an A chain linked by two disulfide bonds.

Its subcellular location is the secreted. This is Bombyxin G-1 (BBXG1) from Bombyx mori (Silk moth).